A 106-amino-acid chain; its full sequence is Large ribosomal subunit protein uL23 (106 aa).

It belongs to the universal ribosomal protein uL23 family. As to quaternary structure, part of the 50S ribosomal subunit. Contacts protein L29, and trigger factor when it is bound to the ribosome.

Functionally, one of the early assembly proteins it binds 23S rRNA. One of the proteins that surrounds the polypeptide exit tunnel on the outside of the ribosome. Forms the main docking site for trigger factor binding to the ribosome. This chain is Large ribosomal subunit protein uL23, found in Neisseria meningitidis serogroup C / serotype 2a (strain ATCC 700532 / DSM 15464 / FAM18).